The primary structure comprises 125 residues: Small ribosomal subunit protein uS12m (125 aa).

2 disordered regions span residues 1–50 (MPTL…SAPR) and 106–125 (GIPNRRRGRSKYGAERPKSI). Over residues 10 to 23 (HGREEKRRTDRTRA) the composition is skewed to basic and acidic residues.

It belongs to the universal ribosomal protein uS12 family.

It is found in the mitochondrion. Functionally, protein S12 is involved in the translation initiation step. This chain is Small ribosomal subunit protein uS12m (RPS12), found in Magnolia soulangeana (Saucer magnolia).